Here is a 24-residue protein sequence, read N- to C-terminus: Caerin-2.1 (24 aa).

Belongs to the frog skin active peptide (FSAP) family. Caerin subfamily. As to expression, expressed by the skin dorsal glands.

Its subcellular location is the secreted. Its function is as follows. Inhibits the formation of NO by neuronal nitric oxide synthase. This is Caerin-2.1 from Litoria rothii (Roth's tree frog).